The sequence spans 727 residues: NADH-ubiquinone oxidoreductase 75 kDa subunit, mitochondrial (727 aa).

The transit peptide at 1–23 (MLRIPVKRALIGLSKSPKGYVRS) directs the protein to the mitochondrion. The 2Fe-2S ferredoxin-type domain occupies 30-108 (NLIEVFVDGQ…GWNILTNSEK (79 aa)). Residues Cys64, Cys75, and Cys78 each coordinate [2Fe-2S] cluster. Lys84 carries the post-translational modification N6-acetyllysine. Cys92 contacts [2Fe-2S] cluster. The 4Fe-4S His(Cys)3-ligated-type domain maps to 108–147 (KSKKAREGVMEFLLANHPLDCPICDQGGECDLQDQSMMFG). The [4Fe-4S] cluster site is built by His124, Cys128, Cys131, Cys137, Cys176, Cys179, Cys182, and Cys226. The 4Fe-4S Mo/W bis-MGD-type domain maps to 245-301 (TRKTESIDVMDAVGSNIVVSTRTGEVMRILPRMHEDINEEWISDKTRFAYDGLKRQR). 2 positions are modified to N6-acetyllysine: Lys499 and Lys709.

This sequence belongs to the complex I 75 kDa subunit family. In terms of assembly, core subunit of respiratory chain NADH dehydrogenase (Complex I) which is composed of 45 different subunits. This is the largest subunit of complex I and it is a component of the iron-sulfur (IP) fragment of the enzyme. Complex I associates with ubiquinol-cytochrome reductase complex (Complex III) to form supercomplexes. Interacts with MDM2 and AKAP1. Requires [2Fe-2S] cluster as cofactor. It depends on [4Fe-4S] cluster as a cofactor.

It localises to the mitochondrion inner membrane. The enzyme catalyses a ubiquinone + NADH + 5 H(+)(in) = a ubiquinol + NAD(+) + 4 H(+)(out). Its function is as follows. Core subunit of the mitochondrial membrane respiratory chain NADH dehydrogenase (Complex I) which catalyzes electron transfer from NADH through the respiratory chain, using ubiquinone as an electron acceptor. Essential for catalysing the entry and efficient transfer of electrons within complex I. Plays a key role in the assembly and stability of complex I and participates in the association of complex I with ubiquinol-cytochrome reductase complex (Complex III) to form supercomplexes. The protein is NADH-ubiquinone oxidoreductase 75 kDa subunit, mitochondrial (Ndufs1) of Rattus norvegicus (Rat).